We begin with the raw amino-acid sequence, 120 residues long: MSAVAETIQTEMPSPILFTDSAAAKVADLIAEEGNPDLKLRVFVQGGGCSGFQYGFTFDEITNEDDTTMTKNGVSLLIDAMSYQYLVGAEIDYKEDLEGAQFVIKNPNATTTCGCGSSFS.

Residues Cys-49, Cys-113, and Cys-115 each coordinate iron-sulfur cluster.

Belongs to the HesB/IscA family. Homodimer. Requires iron-sulfur cluster as cofactor.

Functionally, required for insertion of 4Fe-4S clusters. This is Putative iron-sulfur cluster insertion protein ErpA from Albidiferax ferrireducens (strain ATCC BAA-621 / DSM 15236 / T118) (Rhodoferax ferrireducens).